Consider the following 171-residue polypeptide: Secreted protein CSS3 (171 aa).

An N-terminal signal peptide occupies residues 1–20 (MVPLFGLFCIFSQLYSLCSA). Residues N37, N139, and N159 are each glycosylated (N-linked (GlcNAc...) asparagine).

The protein localises to the cytoplasm. The protein resides in the secreted. The polypeptide is Secreted protein CSS3 (Saccharomyces cerevisiae (strain ATCC 204508 / S288c) (Baker's yeast)).